We begin with the raw amino-acid sequence, 150 residues long: UPF0178 protein Sbal223_2514 (150 aa).

The protein belongs to the UPF0178 family.

The chain is UPF0178 protein Sbal223_2514 from Shewanella baltica (strain OS223).